Consider the following 1792-residue polypeptide: D-lysergyl-peptide-synthetase subunit 3 (1792 aa).

The interval 239–642 (FRQRCDLHPN…GRKDSQIKIR (404 aa)) is adenylation (A) domain. Positions 779-853 (SNEEHRLQRM…DLARKASQSV (75 aa)) constitute a Carrier domain. Residue S813 is modified to O-(pantetheine 4'-phosphoryl)serine. The tract at residues 895-1285 (EDIYPCTPMQ…HILGQIHGKE (391 aa)) is condensation (C) domain. The interval 1415–1640 (VTGANGFIGT…AGEFNSSAGS (226 aa)) is reductase (R) domain.

It belongs to the NRP synthetase family.

Its pathway is alkaloid biosynthesis; ergot alkaloid biosynthesis. Functionally, D-lysergyl-peptide-synthetase subunit 3; part of the gene cluster that mediates the biosynthesis of fungal ergot alkaloid. DmaW catalyzes the first step of ergot alkaloid biosynthesis by condensing dimethylallyl diphosphate (DMAP) and tryptophan to form 4-dimethylallyl-L-tryptophan. The second step is catalyzed by the methyltransferase easF that methylates 4-dimethylallyl-L-tryptophan in the presence of S-adenosyl-L-methionine, resulting in the formation of 4-dimethylallyl-L-abrine. The catalase easC and the FAD-dependent oxidoreductase easE then transform 4-dimethylallyl-L-abrine to chanoclavine-I which is further oxidized by easD in the presence of NAD(+), resulting in the formation of chanoclavine-I aldehyde. Agroclavine dehydrogenase easG then mediates the conversion of chanoclavine-I aldehyde to agroclavine via a non-enzymatic adduct reaction: the substrate is an iminium intermediate that is formed spontaneously from chanoclavine-I aldehyde in the presence of glutathione. The presence of easA is not required to complete this reaction. Further conversion of agroclavine to paspalic acid is a two-step process involving oxidation of agroclavine to elymoclavine and of elymoclavine to paspalic acid, the second step being performed by the elymoclavine oxidase cloA. Paspalic acid is then further converted to D-lysergic acid. Ergopeptines are assembled from D-lysergic acid and three different amino acids by the D-lysergyl-peptide-synthetases composed each of a monomudular and a trimodular nonribosomal peptide synthetase subunit. LpsB and lpsC encode the monomodular subunits responsible for D-lysergic acid activation and incorporation into the ergopeptine backbone. LpsA1 and A2 subunits encode the trimodular nonribosomal peptide synthetase assembling the tripeptide portion of ergopeptines. LpsA1 is responsible for formation of the major ergopeptine, ergotamine, and lpsA2 for alpha-ergocryptine, the minor ergopeptine of the total alkaloid mixture elaborated by C.purpurea. D-lysergyl-tripeptides are assembled by the nonribosomal peptide synthetases and released as N-(D-lysergyl-aminoacyl)-lactams. Cyclolization of the D-lysergyl-tripeptides is performed by the Fe(2+)/2-ketoglutarate-dependent dioxygenase easH which introduces a hydroxyl group into N-(D-lysergyl-aminoacyl)-lactam at alpha-C of the aminoacyl residue followed by spontaneous condensation with the terminal lactam carbonyl group. The protein is D-lysergyl-peptide-synthetase subunit 3 of Claviceps purpurea (strain 20.1) (Ergot fungus).